The chain runs to 345 residues: tRNA dimethylallyltransferase (345 aa).

9–16 (GPTASGKS) contributes to the ATP binding site. 11-16 (TASGKS) serves as a coordination point for substrate. 2 interaction with substrate tRNA regions span residues 34–37 (DSMQ) and 195–199 (QRMIR).

This sequence belongs to the IPP transferase family. In terms of assembly, monomer. Mg(2+) is required as a cofactor.

The enzyme catalyses adenosine(37) in tRNA + dimethylallyl diphosphate = N(6)-dimethylallyladenosine(37) in tRNA + diphosphate. In terms of biological role, catalyzes the transfer of a dimethylallyl group onto the adenine at position 37 in tRNAs that read codons beginning with uridine, leading to the formation of N6-(dimethylallyl)adenosine (i(6)A). The sequence is that of tRNA dimethylallyltransferase from Orientia tsutsugamushi (strain Ikeda) (Rickettsia tsutsugamushi).